Here is a 516-residue protein sequence, read N- to C-terminus: Putative glucosylceramidase 2 (516 aa).

The signal sequence occupies residues 1 to 23; that stretch reads MSIAWSCFVLGLFALASLQVALA. Residue Glu-254 is the Proton donor of the active site. The active-site Nucleophile is Glu-358.

The protein belongs to the glycosyl hydrolase 30 family.

It carries out the reaction a beta-D-glucosylceramide + H2O = an N-acyl-sphingoid base + D-glucose. It catalyses the reaction a beta-D-glucosyl-(1&lt;-&gt;1')-N-acylsphing-4-enine + H2O = an N-acylsphing-4-enine + D-glucose. The enzyme catalyses an N-acyl-1-beta-D-glucosyl-15-methylhexadecasphing-4-enine + H2O = an N-acyl-15-methylhexadecasphing-4-enine + D-glucose. The protein operates within lipid metabolism; sphingolipid metabolism. In terms of biological role, glucosylceramidase that catalyzes the hydrolysis of glucosylceramides into free ceramides and glucose. C.elegans contain specific sphingoid bases, which are unique or different in structure compared to the sphingoid bases found in other animals. Two examples of these distinctive compounds are: 15-methylhexadecasphinganine and 15-methylhexadecasphing-4-enine. This is Putative glucosylceramidase 2 (gba-2) from Caenorhabditis elegans.